We begin with the raw amino-acid sequence, 286 residues long: Putative WUSCHEL-related homeobox 2 (286 aa).

A disordered region spans residues 1-25 (MAPAVQQQQSGGGGGSTGAAAVGST). Residues 23–87 (GSTTRWCPTP…NHKARDRQKL (65 aa)) constitute a DNA-binding region (homeobox; WUS-type).

It belongs to the WUS homeobox family.

It is found in the nucleus. Transcription factor which may be involved in developmental processes. This chain is Putative WUSCHEL-related homeobox 2 (WOX2), found in Oryza sativa subsp. japonica (Rice).